The following is a 670-amino-acid chain: Neutral ceramidase (670 aa).

The first 24 residues, 1 to 24, serve as a signal peptide directing secretion; it reads MSRSAFTALLLSCVLLALSMPARA. Mg(2+) is bound at residue histidine 61. 3 residues coordinate substrate: asparagine 84, glutamine 92, and aspartate 111. Histidine 121 contacts Zn(2+). Position 130 (serine 130) interacts with substrate. Histidine 228 contributes to the Zn(2+) binding site. Serine 274 acts as the Nucleophile in catalysis. Cysteine 346 and cysteine 394 are disulfide-bonded. Zn(2+) is bound at residue glutamate 435. Substrate is bound at residue tyrosine 469. Zn(2+) is bound at residue tyrosine 472. 3 residues coordinate Mg(2+): aspartate 603, aspartate 605, and threonine 608. Residues 644–670 are required for correct folding and localization; sequence NAKNFWTQKISEIGGSTRSFEVLGTTP.

This sequence belongs to the neutral ceramidase family. As to quaternary structure, homodimer. Requires Zn(2+) as cofactor. The cofactor is Mg(2+).

Its subcellular location is the secreted. The catalysed reaction is an N-acylsphing-4-enine + H2O = sphing-4-enine + a fatty acid. Its activity is regulated as follows. Inhibited by EDTA, EGTA and D/L-sphinganine D-erythro-sphingosine. L-erythro-sphingosine is a less powerful inhibitor. Stimulated by glycerophospholipids: cardiolipin is the most effective, followed by phosphatidic acid, phosphatidylethanolamine and phosphatidylglycerol, whereas phosphatidylcholine, lysophosphatidic acid and diacylglycerol are less effective. In terms of biological role, catalyzes the cleavage of the N-acyl linkage of the ceramides (Cers) to yield sphingosine (Sph) and free fatty acid at an optimal pH of 8-9. Also catalyzes the synthesis of Cers from Sph and fatty acid. The sequence is that of Neutral ceramidase from Pseudomonas aeruginosa (strain ATCC 15692 / DSM 22644 / CIP 104116 / JCM 14847 / LMG 12228 / 1C / PRS 101 / PAO1).